A 567-amino-acid chain; its full sequence is 25S rRNA (cytosine-C(5))-methyltransferase NSUN5 (567 aa).

Residues 1–17 are compositionally biased toward basic residues; sequence MVARRNKPKAPLVKHRF. A disordered region spans residues 1 to 88; sequence MVARRNKPKA…KTPPATKQKF (88 aa). Residues 312–318, Glu-336, Asp-363, and Asp-383 contribute to the S-adenosyl-L-methionine site; that span reads CSAPGNK. The active-site Nucleophile is the Cys-444.

It belongs to the class I-like SAM-binding methyltransferase superfamily. RsmB/NOP family.

It carries out the reaction a cytidine in 25S rRNA + S-adenosyl-L-methionine = a 5-methylcytidine in 25S rRNA + S-adenosyl-L-homocysteine + H(+). Functionally, S-adenosyl-L-methionine-dependent methyltransferase that specifically methylates the C(5) position of cytosine 2268 (m5C2268) in 25S rRNA. This is 25S rRNA (cytosine-C(5))-methyltransferase NSUN5 from Arabidopsis thaliana (Mouse-ear cress).